A 311-amino-acid polypeptide reads, in one-letter code: Thymidylate synthase (311 aa).

DUMP is bound by residues Arg-28 and Arg-172 to Arg-173. Cys-192 (nucleophile) is an active-site residue. DUMP is bound by residues Arg-213–Asp-216, Asn-224, and His-254–Tyr-256. Asp-216 provides a ligand contact to (6R)-5,10-methylene-5,6,7,8-tetrahydrofolate. Ala-310 contributes to the (6R)-5,10-methylene-5,6,7,8-tetrahydrofolate binding site.

It belongs to the thymidylate synthase family. Bacterial-type ThyA subfamily. As to quaternary structure, homodimer.

It is found in the cytoplasm. It catalyses the reaction dUMP + (6R)-5,10-methylene-5,6,7,8-tetrahydrofolate = 7,8-dihydrofolate + dTMP. It participates in pyrimidine metabolism; dTTP biosynthesis. Catalyzes the reductive methylation of 2'-deoxyuridine-5'-monophosphate (dUMP) to 2'-deoxythymidine-5'-monophosphate (dTMP) while utilizing 5,10-methylenetetrahydrofolate (mTHF) as the methyl donor and reductant in the reaction, yielding dihydrofolate (DHF) as a by-product. This enzymatic reaction provides an intracellular de novo source of dTMP, an essential precursor for DNA biosynthesis. This is Thymidylate synthase from Sphingopyxis alaskensis (strain DSM 13593 / LMG 18877 / RB2256) (Sphingomonas alaskensis).